Consider the following 528-residue polypeptide: Protein spinster homolog 1 (528 aa).

Positions 1–38 (MAGSDTAPFLSQADDPDDGPAPGHPGLPGPMGNPKSGE) are disordered. The residue at position 2 (Ala-2) is an N-acetylalanine. The next 12 helical transmembrane spans lie at 60–80 (LIVV…FTVA), 98–118 (GLIQ…FGYL), 126–146 (YLMC…SFIP), 160–180 (VGVG…DLFV), 187–207 (MLSI…IAGS), 218–238 (WALR…FLVV), 278–298 (LGFT…PAFL), 323–343 (LIFG…GVEI), 357–377 (LVCA…LACA), 381–401 (IVAT…NWAI), 421–441 (FQIV…IGLI), and 465–485 (MLCA…AMFI). A Phosphoserine modification is found at Ser-518.

The protein belongs to the major facilitator superfamily. Spinster (TC 2.A.1.49) family. In terms of assembly, interacts with BCL2 and BCL2L1.

It localises to the lysosome membrane. The enzyme catalyses a 1-acyl-sn-glycero-3-phosphocholine(out) + H(+)(out) = a 1-acyl-sn-glycero-3-phosphocholine(in) + H(+)(in). The catalysed reaction is 1-hexadecanoyl-sn-glycero-3-phosphocholine(out) + H(+)(out) = 1-hexadecanoyl-sn-glycero-3-phosphocholine(in) + H(+)(in). It carries out the reaction 1-(9Z-octadecenoyl)-sn-glycero-3-phosphocholine(out) + H(+)(out) = 1-(9Z-octadecenoyl)-sn-glycero-3-phosphocholine(in) + H(+)(in). It catalyses the reaction 1-(5Z,8Z,11Z,14Z-eicosatetraenoyl)-sn-glycero-3-phosphocholine(out) + H(+)(out) = 1-(5Z,8Z,11Z,14Z-eicosatetraenoyl)-sn-glycero-3-phosphocholine(in) + H(+)(in). The enzyme catalyses 1-(4Z,7Z,10Z,13Z,16Z,19Z-docosahexaenoyl)-sn-glycero-3-phosphocholine(out) + H(+)(out) = 1-(4Z,7Z,10Z,13Z,16Z,19Z-docosahexaenoyl)-sn-glycero-3-phosphocholine(in) + H(+)(in). The catalysed reaction is a 1-acyl-sn-glycero-3-phosphoethanolamine(out) + H(+)(out) = a 1-acyl-sn-glycero-3-phosphoethanolamine(in) + H(+)(in). It carries out the reaction 1-(9Z-octadecenoyl)-sn-glycero-3-phosphoethanolamine(out) + H(+)(out) = 1-(9Z-octadecenoyl)-sn-glycero-3-phosphoethanolamine(in) + H(+)(in). It catalyses the reaction 1-acyl-sn-glycero-3-phospho-(1'-sn-glycerol)(out) + H(+)(out) = 1-acyl-sn-glycero-3-phospho-(1'-sn-glycerol)(in) + H(+)(in). The enzyme catalyses 1-(9Z-octadecenoyl)-sn-glycero-3-phospho-(1'-sn-glycerol)(out) + H(+)(out) = 1-(9Z-octadecenoyl)-sn-glycero-3-phospho-(1'-sn-glycerol)(in) + H(+)(in). The catalysed reaction is a 1-O-(1Z-alkenyl)-sn-glycero-3-phosphocholine(out) + H(+)(out) = a 1-O-(1Z-alkenyl)-sn-glycero-3-phosphocholine(in) + H(+)(in). It carries out the reaction 1-(1Z-hexadecenyl)-sn-glycero-3-phosphocholine(out) + H(+)(out) = 1-(1Z-hexadecenyl)-sn-glycero-3-phosphocholine(in) + H(+)(in). It catalyses the reaction a 1-O-(1Z-alkenyl)-sn-glycero-3-phosphoethanolamine(out) + H(+)(out) = a 1-O-(1Z-alkenyl)-sn-glycero-3-phosphoethanolamine(in) + H(+)(in). The enzyme catalyses 1-O-(1Z-hexadecenyl)-sn-glycero-3-phosphoethanolamine(out) + H(+)(out) = 1-O-(1Z-hexadecenyl)-sn-glycero-3-phosphoethanolamine(in) + H(+)(in). Plays a critical role in the phospholipid salvage pathway from lysosomes to the cytosol. Mediates the rate-limiting, proton-dependent, lysosomal efflux of lysophospholipids, which can then be reacylated by acyltransferases in the endoplasmic reticulum to form phospholipids. Selective for zwitterionic headgroups such as lysophosphatidylcholine (LPC) and lysophosphatidylethanolamine (LPE), can also transport lysophosphatidylglycerol (LPG), but not other anionic lysophospholipids, sphingosine, nor sphingomyelin. Transports lysophospholipids with saturated, monounsaturated, and polyunsaturated fatty acids, such as 1-hexadecanoyl-sn-glycero-3-phosphocholine, 1-(9Z-octadecenoyl)-sn-glycero-3-phosphocholine and 1-(4Z,7Z,10Z,13Z,16Z,19Z-docosahexaenoyl)-sn-glycero-3-phosphocholine, respectively. Can also transport lysoplasmalogen (LPC with a fatty alcohol) such as 1-(1Z-hexadecenyl)-sn-glycero-3-phosphocholine. Essential player in lysosomal homeostasis. Crucial for cell survival under conditions of nutrient limitation. May be involved in necrotic or autophagic cell death. This chain is Protein spinster homolog 1 (Spns1), found in Rattus norvegicus (Rat).